Reading from the N-terminus, the 199-residue chain is Peroxiredoxin-1 (199 aa).

The 160-residue stretch at 6–165 folds into the Thioredoxin domain; it reads AFIGKPAPDF…TLRLVQAFQF (160 aa). Catalysis depends on Cys52, which acts as the Cysteine sulfenic acid (-SOH) intermediate.

This sequence belongs to the peroxiredoxin family. AhpC/Prx1 subfamily. Homodimer; disulfide-linked, upon oxidation. 5 homodimers assemble to form a ring-like decamer. Interacts with GDPD5; forms a mixed-disulfide with GDPD5. Interacts with SESN1 and SESN2. In terms of processing, the enzyme can be inactivated by further oxidation of the cysteine sulfenic acid (C(P)-SOH) to sulphinic acid (C(P)-SO2H) instead of its condensation to a disulfide bond. It can be reactivated by forming a transient disulfide bond with sulfiredoxin SRXN1, which reduces the cysteine sulfinic acid in an ATP- and Mg-dependent manner.

The protein resides in the cytoplasm. It carries out the reaction a hydroperoxide + [thioredoxin]-dithiol = an alcohol + [thioredoxin]-disulfide + H2O. In terms of biological role, thiol-specific peroxidase that catalyzes the reduction of hydrogen peroxide and organic hydroperoxides to water and alcohols, respectively. Plays a role in cell protection against oxidative stress by detoxifying peroxides and as sensor of hydrogen peroxide-mediated signaling events. Might participate in the signaling cascades of growth factors and tumor necrosis factor-alpha by regulating the intracellular concentrations of H(2)O(2). Reduces an intramolecular disulfide bond in GDPD5 that gates the ability to GDPD5 to drive postmitotic motor neuron differentiation. This is Peroxiredoxin-1 (PRDX1) from Gallus gallus (Chicken).